An 83-amino-acid polypeptide reads, in one-letter code: MDLQSLASSIPQDTLLVILAYALLGGLYLLVVPLALFFWMNSRWTRMGKIERLLVYGLVFLFFPGMVVFAPFLNFRLSGQGDN.

2 helical membrane-spanning segments follow: residues 18 to 38 (ILAY…ALFF) and 53 to 73 (LLVY…APFL).

Belongs to the complex I NdhL subunit family. In terms of assembly, NDH-1 can be composed of about 15 different subunits; different subcomplexes with different compositions have been identified which probably have different functions.

The protein localises to the cellular thylakoid membrane. The catalysed reaction is a plastoquinone + NADH + (n+1) H(+)(in) = a plastoquinol + NAD(+) + n H(+)(out). It carries out the reaction a plastoquinone + NADPH + (n+1) H(+)(in) = a plastoquinol + NADP(+) + n H(+)(out). Functionally, NDH-1 shuttles electrons from an unknown electron donor, via FMN and iron-sulfur (Fe-S) centers, to quinones in the respiratory and/or the photosynthetic chain. The immediate electron acceptor for the enzyme in this species is believed to be plastoquinone. Couples the redox reaction to proton translocation, and thus conserves the redox energy in a proton gradient. Cyanobacterial NDH-1 also plays a role in inorganic carbon-concentration. This chain is NAD(P)H-quinone oxidoreductase subunit L, found in Parasynechococcus marenigrum (strain WH8102).